The primary structure comprises 661 residues: WD repeat-containing protein 26 (661 aa).

Over residues 1–27 the composition is skewed to gly residues; the sequence is MQANGAGGGGGGGGGGGGGGGGGGGQG. Disordered stretches follow at residues 1-70 and 99-118; these read MQAN…ASNN and TAAS…KKKK. Composition is skewed to low complexity over residues 56–70 and 99–113; these read ANGL…ASNN and TAAS…LGSS. S121 and S123 each carry phosphoserine. A LisH domain is found at 123–155; sequence SDEDVIRLIGQHLNGLGLNQTVDLLMQESGCRL. One can recognise a CTLH domain in the interval 156 to 231; the sequence is EHPSATKFRN…EYLEDGKVLE (76 aa). WD repeat units lie at residues 353–392, 399–438, 444–484, 524–563, 566–608, and 611–651; these read EHCN…HLLK, GHAY…GELR, SHED…DSWE, QEDH…LVRK, GVTQ…PIAE, and GHTR…DHQN.

As to quaternary structure, forms homooligomers. Identified in the CTLH complex that contains GID4, RANBP9 and/or RANBP10, MKLN1, MAEA, RMND5A (or alternatively its paralog RMND5B), GID8, ARMC8, WDR26 and YPEL5. Within this complex, MAEA, RMND5A (or alternatively its paralog RMND5B), GID8, WDR26, and RANBP9 and/or RANBP10 form the catalytic core, while GID4, MKLN1, ARMC8 and YPEL5 have ancillary roles. Interacts with DDB1-CUL4A/B E3 ligase complexes. Forms a complex composed of at least WDR26, a G-beta:gamma unit, and PLCB2. Interacts with AXIN1. Broadly expressed, with highest levels in heart and skeletal muscle.

Its subcellular location is the cytoplasm. The protein resides in the nucleus. The protein localises to the mitochondrion. G-beta-like protein involved in cell signal transduction. Acts as a negative regulator in MAPK signaling pathway. Functions as a scaffolding protein to promote G beta:gamma-mediated PLCB2 plasma membrane translocation and subsequent activation in leukocytes. Core component of the CTLH E3 ubiquitin-protein ligase complex that selectively accepts ubiquitin from UBE2H and mediates ubiquitination and subsequent proteasomal degradation of the transcription factor HBP1. Acts as a negative regulator of the canonical Wnt signaling pathway through preventing ubiquitination of beta-catenin CTNNB1 by the beta-catenin destruction complex, thus negatively regulating CTNNB1 degradation. Serves as a scaffold to coordinate PI3K/AKT pathway-driven cell growth and migration. Protects cells from oxidative stress-induced apoptosis via the down-regulation of AP-1 transcriptional activity as well as by inhibiting cytochrome c release from mitochondria. Also protects cells by promoting hypoxia-mediated autophagy and mitophagy. The protein is WD repeat-containing protein 26 (WDR26) of Homo sapiens (Human).